The primary structure comprises 402 residues: Serine/threonine transporter SstT (402 aa).

A run of 8 helical transmembrane segments spans residues 17–37 (IAIG…ITVI), 44–64 (FVGG…ANAL), 78–98 (IIVL…ISHY), 138–158 (ALSQ…GFAM), 179–199 (IVRW…FDTI), 212–232 (VLIL…NPII), 295–315 (MAGA…TLGI), and 336–356 (ASGI…LFGI).

The protein belongs to the dicarboxylate/amino acid:cation symporter (DAACS) (TC 2.A.23) family.

It localises to the cell membrane. The enzyme catalyses L-serine(in) + Na(+)(in) = L-serine(out) + Na(+)(out). The catalysed reaction is L-threonine(in) + Na(+)(in) = L-threonine(out) + Na(+)(out). In terms of biological role, involved in the import of serine and threonine into the cell, with the concomitant import of sodium (symport system). This Streptococcus thermophilus (strain ATCC BAA-250 / LMG 18311) protein is Serine/threonine transporter SstT.